We begin with the raw amino-acid sequence, 476 residues long: Adenosylhomocysteinase (476 aa).

Residues Thr65, Asp140, and Glu201 each contribute to the substrate site. 202–204 (TTT) contributes to the NAD(+) binding site. Lys231 and Asp235 together coordinate substrate. Residues Asn236, 265–270 (GYGDVG), Glu288, Asn323, 344–346 (IGH), and Asn392 each bind NAD(+).

It belongs to the adenosylhomocysteinase family. NAD(+) is required as a cofactor.

It is found in the cytoplasm. It catalyses the reaction S-adenosyl-L-homocysteine + H2O = L-homocysteine + adenosine. It functions in the pathway amino-acid biosynthesis; L-homocysteine biosynthesis; L-homocysteine from S-adenosyl-L-homocysteine: step 1/1. May play a key role in the regulation of the intracellular concentration of adenosylhomocysteine. The chain is Adenosylhomocysteinase from Bacteroides thetaiotaomicron (strain ATCC 29148 / DSM 2079 / JCM 5827 / CCUG 10774 / NCTC 10582 / VPI-5482 / E50).